Here is a 151-residue protein sequence, read N- to C-terminus: 3-dehydroquinate dehydratase (151 aa).

Tyrosine 24 serves as the catalytic Proton acceptor. Residues asparagine 76, histidine 82, and aspartate 89 each contribute to the substrate site. Histidine 102 functions as the Proton donor in the catalytic mechanism. Substrate contacts are provided by residues 103 to 104 (VS) and arginine 113.

The protein belongs to the type-II 3-dehydroquinase family. In terms of assembly, homododecamer.

The enzyme catalyses 3-dehydroquinate = 3-dehydroshikimate + H2O. It functions in the pathway metabolic intermediate biosynthesis; chorismate biosynthesis; chorismate from D-erythrose 4-phosphate and phosphoenolpyruvate: step 3/7. Catalyzes a trans-dehydration via an enolate intermediate. This chain is 3-dehydroquinate dehydratase, found in Rhodopseudomonas palustris (strain ATCC BAA-98 / CGA009).